A 279-amino-acid polypeptide reads, in one-letter code: MKRLFLSIFLLGSCLALAACADQEANAEQPMPKAEQKKPEKKAVQVQKKEDDTSAWIKTEKPAKLPILMYHSISSGNSLRVPKKEFEAHMKWLHDNGYQTLTPKEASLMLTQDKKPSEKCVLITFDDGYTDNYQDAYPVLKKYGMKATIFMIGKSIGHKHHLTEEQMKEMAQHGISIESHTIDHLELNGLTPQQQQSEMADSKKLFDNMFHQQTTIISYPVGRYNEETLKAAEKTGYQMGVTTEPGAASRDQGMYALHRVRVSPGMSGSAFGAYIESMK.

The signal sequence occupies residues 1–19 (MKRLFLSIFLLGSCLALAA). A lipid anchor (N-palmitoyl cysteine) is attached at cysteine 20. A lipid anchor (S-diacylglycerol cysteine) is attached at cysteine 20. Positions 29-51 (QPMPKAEQKKPEKKAVQVQKKED) are disordered. The segment covering 34 to 51 (AEQKKPEKKAVQVQKKED) has biased composition (basic and acidic residues). In terms of domain architecture, NodB homology spans 119-279 (KCVLITFDDG…AFGAYIESMK (161 aa)).

Belongs to the polysaccharide deacetylase family.

Its subcellular location is the cell membrane. The sequence is that of Putative polysaccharide deacetylase YxkH (yxkH) from Bacillus subtilis (strain 168).